A 1007-amino-acid chain; its full sequence is Probable beta-galactosidase A (1007 aa).

The N-terminal stretch at 1 to 18 is a signal peptide; it reads MKLSSACAIALLAAQAAG. Substrate is bound by residues Y96, N140, A141, and E142. N-linked (GlcNAc...) asparagine glycosylation occurs at N156. Substrate is bound at residue N199. Catalysis depends on E200, which acts as the Proton donor. C205 and C206 are disulfide-bonded. Y260 contacts substrate. C266 and C315 are disulfide-bonded. E298 serves as the catalytic Nucleophile. Residue Y364 coordinates substrate. N373, N402, N422, N478, N522, N622, N739, N760, N777, and N805 each carry an N-linked (GlcNAc...) asparagine glycan. The interval 862–881 is disordered; it reads RQGFHQPEPPSQDWKSSSPL. A glycan (N-linked (GlcNAc...) asparagine) is linked at N914.

Belongs to the glycosyl hydrolase 35 family.

The protein localises to the secreted. It carries out the reaction Hydrolysis of terminal non-reducing beta-D-galactose residues in beta-D-galactosides.. Functionally, cleaves beta-linked terminal galactosyl residues from gangliosides, glycoproteins, and glycosaminoglycans. The sequence is that of Probable beta-galactosidase A (lacA) from Aspergillus phoenicis (Aspergillus saitoi).